The chain runs to 3527 residues: BEACH domain-containing protein A2 (3527 aa).

3 disordered regions span residues 25 to 46 (AGEAISDPTTPPSSSQASPSSS), 385 to 423 (SSPHKNRGSNDSKKQPPLSLKTRQNDDSEKQQSLSLNSR), and 454 to 490 (ESSGTSTSLLSQTKLTGYSRRQTPSANNRYDEPCEQG). A compositionally biased stretch (low complexity) spans 28-46 (AISDPTTPPSSSQASPSSS). A compositionally biased stretch (low complexity) spans 455-469 (SSGTSTSLLSQTKLT). The span at 472–481 (SRRQTPSANN) shows a compositional bias: polar residues. 5 LRR repeats span residues 1447 to 1470 (KLESGQTTISMSPTEIIPENNYED), 1499 to 1522 (FSHLSELEMGDNPVETSNCIVLSN), 1542 to 1565 (SIQIASLGFLENLISILWYRSHNL), 1566 to 1588 (AILRQINLVKHLLVTLQRGDVEV), and 2001 to 2024 (SSEMKSLDLTGSSSQVQPIDSRSS). Disordered stretches follow at residues 1992-2023 (GDHVGSVSASSEMKSLDLTGSSSQVQPIDSRS) and 2046-2081 (IPSPSKSSTISTPHPSHISVSEFDASSDQSSGSQGS). A compositionally biased stretch (polar residues) spans 1998-2020 (VSASSEMKSLDLTGSSSQVQPID). LRR repeat units follow at residues 2128–2151 (TEQIKAVQALESILEMLPLYVDPE), 2221–2247 (LLSILQLANKDGRVEEVTSSGKGLLSI), and 2313–2336 (VSAVLQLLVANKNIILCPSNLDTD). A disordered region spans residues 2658–2680 (VNTDEKSETGSPIKSSSGKMDEI). Residues 2666–2675 (TGSPIKSSSG) show a composition bias toward polar residues. A BEACH-type PH domain is found at 2704-2871 (EHLEKIRFRY…EREEVFRNLL (168 aa)). The BEACH domain occupies 2896-3188 (GSRLFKLMAK…QLFQKPHVKR (293 aa)). WD repeat units lie at residues 3272 to 3311 (HEGNQIQCAGVSHDGRIVVTGAEDGLVSVWRVSKDGPRGS), 3322 to 3361 (AHTAKVICLRVSQPYMMIASSSDDCTVIIWDLSSLSFVRQ), 3410 to 3451 (DLIV…DPVS), and 3483 to 3522 (FHKQPVTSLHLTTDLKQLLSGDSAGHLLSWTVPDEILKAS).

This Arabidopsis thaliana (Mouse-ear cress) protein is BEACH domain-containing protein A2.